The sequence spans 505 residues: L-arabinose isomerase (505 aa).

Positions 308, 335, 352, and 453 each coordinate Mn(2+).

This sequence belongs to the arabinose isomerase family. It depends on Mn(2+) as a cofactor.

It catalyses the reaction beta-L-arabinopyranose = L-ribulose. It participates in carbohydrate degradation; L-arabinose degradation via L-ribulose; D-xylulose 5-phosphate from L-arabinose (bacterial route): step 1/3. Its function is as follows. Catalyzes the conversion of L-arabinose to L-ribulose. This is L-arabinose isomerase from Bifidobacterium longum (strain DJO10A).